The sequence spans 425 residues: Glutamyl-tRNA(Gln) amidotransferase subunit D (425 aa).

The interval E53–L84 is disordered. Residues G68–S80 are compositionally biased toward basic and acidic residues. Positions P85–N414 constitute an Asparaginase/glutaminase domain. Active-site residues include T95, T171, D172, and K248.

It belongs to the asparaginase 1 family. GatD subfamily. As to quaternary structure, heterodimer of GatD and GatE.

The enzyme catalyses L-glutamyl-tRNA(Gln) + L-glutamine + ATP + H2O = L-glutaminyl-tRNA(Gln) + L-glutamate + ADP + phosphate + H(+). In terms of biological role, allows the formation of correctly charged Gln-tRNA(Gln) through the transamidation of misacylated Glu-tRNA(Gln) in organisms which lack glutaminyl-tRNA synthetase. The reaction takes place in the presence of glutamine and ATP through an activated gamma-phospho-Glu-tRNA(Gln). The GatDE system is specific for glutamate and does not act on aspartate. The chain is Glutamyl-tRNA(Gln) amidotransferase subunit D from Methanosarcina mazei (strain ATCC BAA-159 / DSM 3647 / Goe1 / Go1 / JCM 11833 / OCM 88) (Methanosarcina frisia).